We begin with the raw amino-acid sequence, 295 residues long: Cytidine deaminase (295 aa).

CMP/dCMP-type deaminase domains lie at 48–168 (TDNQ…FGPS) and 187–295 (EDDD…YLSL). 89 to 91 (NME) lines the substrate pocket. His-102 is a binding site for Zn(2+). Glu-104 (proton donor) is an active-site residue. Zn(2+) is bound by residues Cys-129 and Cys-132.

This sequence belongs to the cytidine and deoxycytidylate deaminase family. In terms of assembly, homodimer. Requires Zn(2+) as cofactor.

It carries out the reaction cytidine + H2O + H(+) = uridine + NH4(+). The catalysed reaction is 2'-deoxycytidine + H2O + H(+) = 2'-deoxyuridine + NH4(+). Its function is as follows. This enzyme scavenges exogenous and endogenous cytidine and 2'-deoxycytidine for UMP synthesis. This Vibrio vulnificus (strain CMCP6) protein is Cytidine deaminase.